The chain runs to 152 residues: 6,7-dimethyl-8-ribityllumazine synthase (152 aa).

5-amino-6-(D-ribitylamino)uracil is bound by residues Phe21, 55 to 57 (AFE), and 79 to 81 (CVI). (2S)-2-hydroxy-3-oxobutyl phosphate is bound at residue 84 to 85 (ST). The Proton donor role is filled by His87. Phe112 serves as a coordination point for 5-amino-6-(D-ribitylamino)uracil. Residue Arg126 coordinates (2S)-2-hydroxy-3-oxobutyl phosphate.

The protein belongs to the DMRL synthase family. As to quaternary structure, forms an icosahedral capsid composed of 60 subunits, arranged as a dodecamer of pentamers.

It catalyses the reaction (2S)-2-hydroxy-3-oxobutyl phosphate + 5-amino-6-(D-ribitylamino)uracil = 6,7-dimethyl-8-(1-D-ribityl)lumazine + phosphate + 2 H2O + H(+). It participates in cofactor biosynthesis; riboflavin biosynthesis; riboflavin from 2-hydroxy-3-oxobutyl phosphate and 5-amino-6-(D-ribitylamino)uracil: step 1/2. In terms of biological role, catalyzes the formation of 6,7-dimethyl-8-ribityllumazine by condensation of 5-amino-6-(D-ribitylamino)uracil with 3,4-dihydroxy-2-butanone 4-phosphate. This is the penultimate step in the biosynthesis of riboflavin. The sequence is that of 6,7-dimethyl-8-ribityllumazine synthase from Staphylococcus saprophyticus subsp. saprophyticus (strain ATCC 15305 / DSM 20229 / NCIMB 8711 / NCTC 7292 / S-41).